Consider the following 376-residue polypeptide: Putative transcription factor egl-18 (376 aa).

Disordered stretches follow at residues 1 to 33, 65 to 122, 148 to 197, and 240 to 264; these read MSISIMTETRPESAEQQHHEVLQRPSDEPCSGC, NNEL…LPDF, MVQQ…SDIP, and ATPSSQSQDSSMFEKTETSGDPNAA. A compositionally biased stretch (basic and acidic residues) spans 9 to 27; sequence TRPESAEQQHHEVLQRPSD. Low complexity-rich tracts occupy residues 68–89 and 165–175; these read LKSSSVSSGKASPSPAESRSSP and QQSVSPPQSKS. The segment covering 176–195 has biased composition (basic and acidic residues); the sequence is VKIEDPMDQDVKQEESERSD. The segment covering 241-250 has biased composition (polar residues); sequence TPSSQSQDSS. Residues 266–290 form a GATA-type zinc finger; that stretch reads CSNCRTDKTTAWRRDAEGKLVCNPC.

In terms of tissue distribution, expressed in differentiated seam cells. Expressed in the head and trunk.

The protein resides in the nucleus. Its function is as follows. Probable transcription factor. Involved in embryonic development and in vulval development in larvae, acting redundantly, at least in part, with elt-6. Perhaps acting together with elt-6, may form a positive feedback loop to initiate and maintain lin-39 gene expression to ensure proper vulval precursor cell (VPC) fate specification. Together with elt-6, acts as a downstream target of the Wnt/beta-catenin asymmetry pathway, required to adopt or maintain the seam cell fate. Required in seam cells, acting redundantly with elt-6, to promote production of alae, expression of several seam-specific genes and maintenance of seam cells in an unfused state. Plays a role in longevity. May form a transcriptional circuit with GATA factors elt-3 and elt-6. In Caenorhabditis elegans, this protein is Putative transcription factor egl-18.